The sequence spans 337 residues: Centromere protein N (337 aa).

A phosphoserine mark is found at S226 and S233.

Belongs to the CENP-N/CHL4 family. Component of the CENPA-NAC complex, at least composed of CENPA, CENPC, CENPH, CENPM, CENPN, CENPT and CENPU. The CENPA-NAC complex interacts with the CENPA-CAD complex, composed of CENPI, CENPK, CENPL, CENPO, CENPP, CENPQ, CENPR and CENPS. Interacts directly with CENPA. Identified in a centromere complex containing histones H2A, H2B and H4, and at least CENPA, CENPB, CENPC, CENPT, CENPN, HJURP, SUPT16H, SSRP1 and RSF1.

The protein localises to the nucleus. The protein resides in the chromosome. It localises to the centromere. Its subcellular location is the kinetochore. Component of the CENPA-NAC (nucleosome-associated) complex, a complex that plays a central role in assembly of kinetochore proteins, mitotic progression and chromosome segregation. The CENPA-NAC complex recruits the CENPA-CAD (nucleosome distal) complex and may be involved in incorporation of newly synthesized CENPA into centromeres. CENPN is the first protein to bind specifically to CENPA nucleosomes and the direct binding of CENPA nucleosomes by CENPN is required for centromere assembly. Required for chromosome congression and efficiently align the chromosomes on a metaphase plate. The sequence is that of Centromere protein N (Cenpn) from Mus musculus (Mouse).